The sequence spans 223 residues: Probable glutathione S-transferase (223 aa).

The GST N-terminal domain maps to 2 to 81 (AEVKLLGFWY…YIDETFEGPS (80 aa)). Residues Ser12, Lys39, Val53, and 65 to 66 (ES) contribute to the glutathione site. A GST C-terminal domain is found at 86–212 (DPYDRALARF…ELLAFFRARF (127 aa)).

This sequence belongs to the GST superfamily. HSP26 family. As to expression, root tip-specific expression.

It catalyses the reaction RX + glutathione = an S-substituted glutathione + a halide anion + H(+). This Nicotiana tabacum (Common tobacco) protein is Probable glutathione S-transferase.